Consider the following 675-residue polypeptide: Probable potassium transport system protein Kup (675 aa).

Positions 1–12 (MEPAMPEHDGDH) are enriched in basic and acidic residues. The disordered stretch occupies residues 1–25 (MEPAMPEHDGDHASNPPHGVGIPND). 12 helical membrane passes run 62-82 (ALLA…LYAL), 104-124 (LASL…VILI), 153-173 (WLFG…SIIT), 195-215 (IIIP…VLGT), 222-242 (FGPI…KGIF), 255-275 (FALE…GSVV), 300-320 (WLFF…ALLI), 332-352 (LLVP…ATVI), 390-410 (IYLP…VLAF), 419-439 (AYGI…MVVF), 450-470 (VAIV…ANVL), and 472-492 (IPDG…IMTT).

It belongs to the HAK/KUP transporter (TC 2.A.72) family.

The protein localises to the cell inner membrane. The enzyme catalyses K(+)(in) + H(+)(in) = K(+)(out) + H(+)(out). Transport of potassium into the cell. Likely operates as a K(+):H(+) symporter. This chain is Probable potassium transport system protein Kup, found in Gluconobacter oxydans (strain 621H) (Gluconobacter suboxydans).